A 95-amino-acid polypeptide reads, in one-letter code: Protein TRACHEARY ELEMENT DIFFERENTIATION-RELATED 6 (95 aa).

Topologically, residues 1–3 (MAT) are extracellular. The helical transmembrane segment at 4–24 (IFIVFVSFGCVFVLGIAAFVL) threads the bilayer. The Cytoplasmic segment spans residues 25 to 95 (CCLIKKWKCS…KLGTASTSKA (71 aa)).

In terms of assembly, interacts with the secondary cell wall (SCW)-related cellulose synthase complex. Accumulates in cells differentiating into tracheary element (TE) which undergo secondary cell wall (SCW) formation.

The protein localises to the cell membrane. The protein resides in the secreted. Its subcellular location is the cell wall. Involved in the secondary cell wall (SCW) formation of vessel elements (e.g. protoxylem and metaxylem), thus promoting tracheary element (TE) differentiation. This is Protein TRACHEARY ELEMENT DIFFERENTIATION-RELATED 6 from Zinnia elegans (Garden zinnia).